A 610-amino-acid polypeptide reads, in one-letter code: UvrABC system protein C (610 aa).

A GIY-YIG domain is found at Ser16–Val94. The UVR domain occupies Asp204–Val239.

Belongs to the UvrC family. As to quaternary structure, interacts with UvrB in an incision complex.

The protein localises to the cytoplasm. Functionally, the UvrABC repair system catalyzes the recognition and processing of DNA lesions. UvrC both incises the 5' and 3' sides of the lesion. The N-terminal half is responsible for the 3' incision and the C-terminal half is responsible for the 5' incision. The sequence is that of UvrABC system protein C from Shigella boydii serotype 18 (strain CDC 3083-94 / BS512).